The chain runs to 562 residues: Aureusidin synthase (562 aa).

Disulfide bonds link cysteine 71–cysteine 86 and cysteine 85–cysteine 148. Cu cation contacts are provided by histidine 147, histidine 168, histidine 177, histidine 301, histidine 305, and histidine 335. Residues 151 to 168 (CAGAYNQAGFTNLKLQIH) constitute a cross-link (2'-(S-cysteinyl)-histidine (Cys-His)).

This sequence belongs to the tyrosinase family. Monomer. Requires Cu(2+) as cofactor. In terms of processing, glycosylated. Contains probably N- and C-terminal propeptides. As to expression, expressed in petals. Not detected in stems and leaves.

The protein resides in the vacuole lumen. It catalyses the reaction 2',4,4',6'-tetrahydroxychalcone 4'-O-beta-D-glucoside + O2 = aureusidin 6-O-beta-glucoside + H2O. It carries out the reaction 2 2',3,4,4',6'-pentahydroxychalcone 4'-O-beta-D-glucoside + O2 + 2 H(+) = 2 aureusidin 6-O-beta-glucoside + 2 H2O. The catalysed reaction is 2',3,4,4',6'-pentahydroxychalcone 4'-O-beta-D-glucoside + O2 + H(+) = bracteatin 6-O-beta-glucoside + H2O. With respect to regulation, h(2)O(2) activates the 3-hydroxylation and oxidative cyclization of tetrahydroxychalcone but inhibits reaction with pentahydroxychalcone. Inhibited by phenylthiourea. Involved in the biosynthesis of aurones, plant flavonoids that provide yellow coloration to flowers. Can use tetrahydroxychalcone (THC), pentahydroxychalcone (PHC), THC 4'-glucoside and PHC 4'-glucoside as substrates, but not 2'-hydroxychalcone, 4-hydroxychalcone, PHC 3-glucoside, 2',6'-dihydroxy-4,4'-dimethoxychalcone, naringenin, eriodictyol and 4,4',6-trihydroxyaurone. Can also produce bracteatin from PHC. The chain is Aureusidin synthase (AS1) from Antirrhinum majus (Garden snapdragon).